The primary structure comprises 259 residues: Complement factor D (259 aa).

An N-terminal signal peptide occupies residues 1–21; it reads MADRSLHLVVLILLGTALCAA. Positions 22–26 are cleaved as a propeptide — activation peptide; the sequence is QPRGR. Residues 27 to 254 enclose the Peptidase S1 domain; the sequence is ILRGQEAPSH…YVAWIDGVMA (228 aa). Cysteines 52 and 68 form a disulfide. Catalysis depends on charge relay system residues His-67 and Asp-115. Disulfide bonds link Cys-149/Cys-215, Cys-180/Cys-196, and Cys-205/Cys-230. Ser-209 (charge relay system) is an active-site residue. A self-inhibitor loop region spans residues 224 to 228; the sequence is TSGSR.

This sequence belongs to the peptidase S1 family. In terms of processing, CFD is activated by the removal of 5 residues at the N-terminus, named activation peptide, by the MASP-3 isoform of MASP1.

It is found in the secreted. It catalyses the reaction Selective cleavage of Arg-|-Lys bond in complement factor B when in complex with complement subcomponent C3b or with cobra venom factor.. With respect to regulation, circulates in plasma in a mature but self-inhibited form. Activated by factor B (CFB), which displaces the self-inhibition loop. Associates with CFB complexed with complement C3b. In terms of biological role, serine protease that initiates the alternative pathway of the complement system, a cascade of proteins that leads to phagocytosis and breakdown of pathogens and signaling that strengthens the adaptive immune system. In contrast to other complement pathways (classical, lectin and GZMK) that are directly activated by pathogens or antigen-antibody complexes, the alternative complement pathway is initiated by the spontaneous hydrolysis of complement C3. The alternative complement pathway acts as an amplification loop that enhances complement activation by mediating the formation of C3 and C5 convertases. Activated CFD cleaves factor B (CFB) when the latter is complexed with complement C3b, activating the C3 convertase of the alternative pathway. In Bos taurus (Bovine), this protein is Complement factor D (CFD).